The sequence spans 911 residues: Probable dipeptidyl-aminopeptidase B (911 aa).

The interval 1–39 is disordered; sequence MPRPRAAKEEETELLAQHQESPRPSSDGSEASASSISTT. Residues 1–97 are Cytoplasmic-facing; the sequence is MPRPRAAKEE…TPVDKKARRT (97 aa). The span at 25–39 shows a compositional bias: low complexity; that stretch reads SSDGSEASASSISTT. Residues 98 to 118 traverse the membrane as a helical; Signal-anchor for type II membrane protein segment; sequence LWIVGTICAVGWALALVSFLM. Residues 119 to 911 lie on the Vacuolar side of the membrane; it reads NGNYKHSSTR…AQADARSLGR (793 aa). N-linked (GlcNAc...) asparagine glycans are attached at residues Asn-268 and Asn-564. Catalysis depends on Ser-755, which acts as the Charge relay system. An N-linked (GlcNAc...) asparagine glycan is attached at Asn-809. Catalysis depends on charge relay system residues Asp-832 and His-865.

This sequence belongs to the peptidase S9B family.

It localises to the vacuole membrane. The enzyme catalyses Release of an N-terminal dipeptide, Xaa-Yaa-|-Zaa-, from a polypeptide, preferentially when Yaa is Pro, provided Zaa is neither Pro nor hydroxyproline.. Functionally, type IV dipeptidyl-peptidase which removes N-terminal dipeptides sequentially from polypeptides having unsubstituted N-termini provided that the penultimate residue is proline. In Phaeosphaeria nodorum (strain SN15 / ATCC MYA-4574 / FGSC 10173) (Glume blotch fungus), this protein is Probable dipeptidyl-aminopeptidase B (DAPB).